Here is a 77-residue protein sequence, read N- to C-terminus: uncharacterized protein (77 aa).

The segment covering 1 to 10 (MFNNKGRRNV) has biased composition (basic residues). Residues 1 to 21 (MFNNKGRRNVRNNEVRRNVPV) form a disordered region. Residues 11–21 (RNNEVRRNVPV) are compositionally biased toward basic and acidic residues. The TRAM domain occupies 20–77 (PVKEGETYTVTIEDMGRGGDGIARVEGFVVFVPETQKGETVNVKITAVKSKFAFAEKI).

This is an uncharacterized protein from Methanocaldococcus jannaschii (strain ATCC 43067 / DSM 2661 / JAL-1 / JCM 10045 / NBRC 100440) (Methanococcus jannaschii).